A 282-amino-acid polypeptide reads, in one-letter code: ADP-ribosyl cyclase/cyclic ADP-ribose hydrolase (282 aa).

Positions 1-24 (MSPVAIVACVCLAVTLTRISPSEA) are cleaved as a signal peptide. Cystine bridges form between Cys-39-Cys-58, Cys-75-Cys-155, Cys-136-Cys-149, Cys-230-Cys-251, and Cys-263-Cys-272.

It belongs to the ADP-ribosyl cyclase family. Ovotestis.

It localises to the cytoplasmic vesicle. It catalyses the reaction NAD(+) = cyclic ADP-beta-D-ribose + nicotinamide + H(+). The catalysed reaction is NAD(+) + H2O = ADP-D-ribose + nicotinamide + H(+). It carries out the reaction nicotinate + NADP(+) = nicotinate-adenine dinucleotide phosphate + nicotinamide. With respect to regulation, activity is presumably regulated by its sequestration in vesicles before egg fertilization. After fertilization and upon NADase release, it could then be regulated via its potential phosphorylation sites. Synthesizes cyclic ADP-ribose (cADPR), a second messenger for calcium mobilization from endoplasmic reticulum. Might make the Ca(2+) mobilizer nicotinate-adenine dinucleotide phosphate. Does not have cADPR hydrolase activity. The chain is ADP-ribosyl cyclase/cyclic ADP-ribose hydrolase from Aplysia kurodai (Kuroda's sea hare).